The chain runs to 67 residues: Large ribosomal subunit protein uL29 (67 aa).

It belongs to the universal ribosomal protein uL29 family.

The chain is Large ribosomal subunit protein uL29 from Heliobacterium modesticaldum (strain ATCC 51547 / Ice1).